The following is a 252-amino-acid chain: tRNA1(Val) (adenine(37)-N6)-methyltransferase (252 aa).

The protein belongs to the methyltransferase superfamily. tRNA (adenine-N(6)-)-methyltransferase family.

The protein resides in the cytoplasm. The catalysed reaction is adenosine(37) in tRNA1(Val) + S-adenosyl-L-methionine = N(6)-methyladenosine(37) in tRNA1(Val) + S-adenosyl-L-homocysteine + H(+). Its function is as follows. Specifically methylates the adenine in position 37 of tRNA(1)(Val) (anticodon cmo5UAC). The protein is tRNA1(Val) (adenine(37)-N6)-methyltransferase of Proteus mirabilis (strain HI4320).